A 545-amino-acid chain; its full sequence is Glutamine-dependent NAD(+) synthetase (545 aa).

A CN hydrolase domain is found at 5–247 (LRIAMAQFDF…DQWLVVDYMR (243 aa)). Glutamate 46 (proton acceptor; for glutaminase activity) is an active-site residue. The active-site For glutaminase activity is the lysine 113. Tyrosine 119 lines the L-glutamine pocket. Cysteine 151 serves as the catalytic Nucleophile; for glutaminase activity. L-glutamine-binding residues include serine 177 and lysine 183. The interval 269–545 (VWRAVVRGVQ…RYPISNAYRG (277 aa)) is ligase. 292–299 (GLSGGIDS) provides a ligand contact to ATP. Residue asparagine 375 participates in deamido-NAD(+) binding. ATP is bound at residue threonine 399. Deamido-NAD(+) is bound by residues glutamate 404 and lysine 516.

This sequence in the C-terminal section; belongs to the NAD synthetase family.

The catalysed reaction is deamido-NAD(+) + L-glutamine + ATP + H2O = L-glutamate + AMP + diphosphate + NAD(+) + H(+). The protein operates within cofactor biosynthesis; NAD(+) biosynthesis; NAD(+) from deamido-NAD(+) (L-Gln route): step 1/1. Catalyzes the ATP-dependent amidation of deamido-NAD to form NAD. Uses L-glutamine as a nitrogen source. This Xylella fastidiosa (strain 9a5c) protein is Glutamine-dependent NAD(+) synthetase.